The following is an 801-amino-acid chain: Cadherin-20 (801 aa).

Residues 1-34 form the signal peptide; that stretch reads MWTSGRMSNAKNWLGLGMSLYFWGLMDLTTTVLS. Residues 35 to 59 constitute a propeptide that is removed on maturation; the sequence is DTPTPQGELEALLSDKPQSHQRTKR. The Extracellular segment spans residues 60-619; the sequence is SWVWNQFFVL…AYMLPVSLSR (560 aa). 5 Cadherin domains span residues 61–165, 166–274, 275–389, 390–494, and 494–610; these read WVWN…EPKF, LDGP…PPRF, PQKH…PPVF, EPGF…APEF, and FPRF…SPEA. Asn261 carries N-linked (GlcNAc...) asparagine glycosylation. N-linked (GlcNAc...) asparagine glycosylation is found at Asn420, Asn461, and Asn542. The chain crosses the membrane as a helical span at residues 620-640; that stretch reads GALIAILACIFVLLVLVLLIL. Residues 641-801 are Cytoplasmic-facing; it reads SMRRHRKQPY…GASEGPAPLW (161 aa).

In terms of tissue distribution, expressed in placenta, adult brain, and fetal brain.

The protein resides in the cell membrane. Cadherins are calcium-dependent cell adhesion proteins. They preferentially interact with themselves in a homophilic manner in connecting cells; cadherins may thus contribute to the sorting of heterogeneous cell types. The polypeptide is Cadherin-20 (CDH20) (Homo sapiens (Human)).